Reading from the N-terminus, the 194-residue chain is Translation machinery-associated protein 22 (194 aa).

The SUI1 domain occupies valine 102–tyrosine 173.

Belongs to the DENR family. As to quaternary structure, interacts with the 40S ribosomal subunit.

The protein localises to the cytoplasm. The chain is Translation machinery-associated protein 22 (tma22) from Aspergillus fumigatus (strain ATCC MYA-4609 / CBS 101355 / FGSC A1100 / Af293) (Neosartorya fumigata).